A 116-amino-acid polypeptide reads, in one-letter code: Large ribosomal subunit protein bL20 (116 aa).

The protein belongs to the bacterial ribosomal protein bL20 family.

In terms of biological role, binds directly to 23S ribosomal RNA and is necessary for the in vitro assembly process of the 50S ribosomal subunit. It is not involved in the protein synthesizing functions of that subunit. The chain is Large ribosomal subunit protein bL20 from Desulfosudis oleivorans (strain DSM 6200 / JCM 39069 / Hxd3) (Desulfococcus oleovorans).